The chain runs to 84 residues: MAHKKGGGSTKNGRDSNPKYLGVKAAGGSTVAAGTIILRQRGTVIKPGVNAGIGRDHTIFALEDGVVTFRNGRNNKKQVDIIAP.

Positions 1 to 21 are disordered; sequence MAHKKGGGSTKNGRDSNPKYL.

It belongs to the bacterial ribosomal protein bL27 family.

The polypeptide is Large ribosomal subunit protein bL27 (Chlorobium phaeovibrioides (strain DSM 265 / 1930) (Prosthecochloris vibrioformis (strain DSM 265))).